A 362-amino-acid chain; its full sequence is Probable endopolygalacturonase II (362 aa).

The N-terminal stretch at 1–20 is a signal peptide; that stretch reads MHSFASLLAYGLAAGATLAS. Residues 21–27 constitute a propeptide that is removed on maturation; it reads ASPIEAR. A disulfide bridge connects residues Cys-30 and Cys-45. The PbH1 1 repeat unit spans residues 156-186; that stretch reads SDDITLTDITINNADGDSLGGHNTDAFDVGN. Asp-201 serves as the catalytic Proton donor. A disulfide bridge connects residues Cys-203 and Cys-219. 4 PbH1 repeats span residues 209–229, 238–259, 267–289, and 301–322; these read GENI…SIGS, VKNV…RIKT, VSEI…VIQQ, and TNGV…DSKA. His-223 is an active-site residue. The N-linked (GlcNAc...) asparagine glycan is linked to Asn-240. 2 disulfide bridges follow: Cys-329/Cys-334 and Cys-353/Cys-362.

This sequence belongs to the glycosyl hydrolase 28 family.

The protein localises to the secreted. The enzyme catalyses (1,4-alpha-D-galacturonosyl)n+m + H2O = (1,4-alpha-D-galacturonosyl)n + (1,4-alpha-D-galacturonosyl)m.. In terms of biological role, involved in maceration and soft-rotting of plant tissue. Hydrolyzes the 1,4-alpha glycosidic bonds of de-esterified pectate in the smooth region of the plant cell wall. The polypeptide is Probable endopolygalacturonase II (pgaII) (Aspergillus kawachii (strain NBRC 4308) (White koji mold)).